The sequence spans 156 residues: Cyanate hydratase (156 aa).

Residues R96, E99, and S122 contribute to the active site.

This sequence belongs to the cyanase family.

It carries out the reaction cyanate + hydrogencarbonate + 3 H(+) = NH4(+) + 2 CO2. Its function is as follows. Catalyzes the reaction of cyanate with bicarbonate to produce ammonia and carbon dioxide. The chain is Cyanate hydratase from Pseudomonas entomophila (strain L48).